A 213-amino-acid polypeptide reads, in one-letter code: Receptor-binding cancer antigen expressed on SiSo cells (213 aa).

At Met-1–Phe-6 the chain is on the extracellular side. A helical; Signal-anchor for type III membrane protein transmembrane segment spans residues Arg-7–Cys-27. The Cytoplasmic segment spans residues Arg-28 to Ser-213. At Ser-36 the chain carries Phosphoserine. Thr-41 carries the post-translational modification Phosphothreonine. Tyr-94 bears the Phosphotyrosine mark. Residues Glu-163–Lys-211 adopt a coiled-coil conformation. A compositionally biased stretch (basic and acidic residues) spans Ala-179–Asn-206. The disordered stretch occupies residues Ala-179–Ser-213.

In terms of assembly, homodimer.

The protein localises to the golgi apparatus membrane. May participate in suppression of cell proliferation and induces apoptotic cell death through activation of interleukin-1-beta converting enzyme (ICE)-like proteases. The sequence is that of Receptor-binding cancer antigen expressed on SiSo cells (EBAG9) from Canis lupus familiaris (Dog).